The following is a 484-amino-acid chain: Sialidase-4 (484 aa).

Residues Tyr-22–Pro-25 carry the FRIP motif motif. Positions 23 and 43 each coordinate substrate. Active-site proton acceptor residues include Asp-47 and Asp-48. The BNR 1 repeat unit spans residues Val-127–Ser-138. Tyr-177 and Tyr-179 together coordinate substrate. The stretch at Phe-200–Cys-211 is one BNR 2 repeat. Substrate contacts are provided by Glu-222 and Arg-242. The BNR 3 repeat unit spans residues Ala-251–Pro-262. A disordered region spans residues Pro-284–Val-357. Low complexity predominate over residues Arg-336–Arg-345. Arg-389 lines the substrate pocket. Catalysis depends on Tyr-419, which acts as the Nucleophile. Residue Glu-440 is part of the active site.

Belongs to the glycosyl hydrolase 33 family. N-glycosylated. Predominant form in liver. Also expressed in brain, kidney and colon. In terms of tissue distribution, highly expressed in brain and at lower levels in kidney and liver.

It localises to the cell membrane. Its subcellular location is the endoplasmic reticulum membrane. The protein localises to the microsome membrane. It is found in the mitochondrion membrane. The protein resides in the cell projection. It localises to the neuron projection. Its subcellular location is the mitochondrion inner membrane. The protein localises to the mitochondrion outer membrane. It is found in the lysosome lumen. The enzyme catalyses Hydrolysis of alpha-(2-&gt;3)-, alpha-(2-&gt;6)-, alpha-(2-&gt;8)- glycosidic linkages of terminal sialic acid residues in oligosaccharides, glycoproteins, glycolipids, colominic acid and synthetic substrates.. It carries out the reaction a ganglioside GM3 + H2O = a beta-D-galactosyl-(1-&gt;4)-beta-D-glucosyl-(1&lt;-&gt;1)-ceramide + N-acetylneuraminate. The catalysed reaction is a ganglioside GM3 (d18:1(4E)) + H2O = a beta-D-Gal-(1-&gt;4)-beta-D-Glc-(1&lt;-&gt;1)-Cer(d18:1(4E)) + N-acetylneuraminate. It catalyses the reaction a ganglioside GM2 + H2O = a ganglioside GA2 + N-acetylneuraminate. The enzyme catalyses a ganglioside GM2 (d18:1(4E)) + H2O = a ganglioside GA2 (d18:1(4E)) + N-acetylneuraminate. It carries out the reaction a ganglioside GD1a + H2O = a ganglioside GM1 + N-acetylneuraminate. The catalysed reaction is a ganglioside GD1a (d18:1(4E)) + H2O = a ganglioside GM1 (d18:1(4E)) + N-acetylneuraminate. It catalyses the reaction a ganglioside GD3 + H2O = a ganglioside GM3 + N-acetylneuraminate. The enzyme catalyses a ganglioside GD3 (d18:1(4E)) + H2O = a ganglioside GM3 (d18:1(4E)) + N-acetylneuraminate. Its function is as follows. Exo-alpha-sialidase that catalyzes the hydrolytic cleavage of the terminal sialic acid (N-acetylneuraminic acid, Neu5Ac) of a glycan moiety in the catabolism of glycolipids, glycoproteins and oligosacharides. Efficiently hydrolyzes gangliosides including alpha-(2-&gt;3)-sialylated GD1a and GM3 and alpha-(2-&gt;8)-sialylated GD3. Hydrolyzes poly-alpha-(2-&gt;8)-sialylated neural cell adhesion molecule NCAM1 likely at growth cones, suppressing neurite outgrowth in hippocampal neurons. May desialylate sialyl Lewis A and X antigens at the cell surface, down-regulating these glycan epitopes recognized by SELE/E selectin in the initiation of cell adhesion and extravasation. Has sialidase activity toward mucin, fetuin and sialyllactose. This chain is Sialidase-4 (NEU4), found in Homo sapiens (Human).